The primary structure comprises 1086 residues: DNA polymerase (1086 aa).

Residues 638–657 are disordered; the sequence is STTRKPVDDVEEHSECNGFT.

The protein belongs to the DNA polymerase type-B family.

The catalysed reaction is DNA(n) + a 2'-deoxyribonucleoside 5'-triphosphate = DNA(n+1) + diphosphate. In terms of biological role, replicates the viral genome. Host DNA polymerases cannot substitute for the viral enzyme in this process. This chain is DNA polymerase, found in Noctuidae (owlet moths).